A 257-amino-acid polypeptide reads, in one-letter code: 5'-nucleotidase SurE (257 aa).

The a divalent metal cation site is built by D13, D14, S44, and N100.

It belongs to the SurE nucleotidase family. A divalent metal cation is required as a cofactor.

The protein resides in the cytoplasm. The enzyme catalyses a ribonucleoside 5'-phosphate + H2O = a ribonucleoside + phosphate. In terms of biological role, nucleotidase that shows phosphatase activity on nucleoside 5'-monophosphates. This is 5'-nucleotidase SurE from Phocaeicola vulgatus (strain ATCC 8482 / DSM 1447 / JCM 5826 / CCUG 4940 / NBRC 14291 / NCTC 11154) (Bacteroides vulgatus).